We begin with the raw amino-acid sequence, 1687 residues long: Muscle calcium channel subunit alpha-1 (1687 aa).

The tract at residues 1–33 (MDDAVCPTETDNVQNKQKATTPKRTQRRGGKQQ) is disordered. Residues 1–61 (MDDAVCPTET…IFCIKIVDSK (61 aa)) lie on the Cytoplasmic side of the membrane. Residues 9 to 23 (ETDNVQNKQKATTPK) are compositionally biased toward polar residues. The stretch at 48-330 (NPLRIFCIKI…LILGVLSGEF (283 aa)) is one I repeat. The helical transmembrane segment at 62-80 (LFEYFILLTIFANCVALAV) threads the bilayer. Topologically, residues 81-99 (YTPYPSGDSNITNQMLEKI) are extracellular. Asn-90 is a glycosylation site (N-linked (GlcNAc...) asparagine). Residues 100–117 (EYIFLVIFTSECVMKIIA) form a helical membrane-spanning segment. Residues 118–130 (YGFVLHTGSYLRN) are Cytoplasmic-facing. Residues 131–145 (GWNFLDFFIVVIGMI) traverse the membrane as a helical segment. Residues 146–157 (STALSNLVKEGF) lie on the Extracellular side of the membrane. The chain crosses the membrane as a helical span at residues 158–176 (DVKALRAFRVLRPLRLVSG). At 177-196 (VPSLQVVLNSILKAMIPLLH) the chain is on the cytoplasmic side. The helical transmembrane segment at 197-216 (IALLVLFVIIIYAIIGLELF) threads the bilayer. Residues 217–302 (SGKLHKTCRH…SIQDAMGSSW (86 aa)) are Extracellular-facing. Glu-285 lines the Ca(2+) pocket. The helical transmembrane segment at 303–327 (EWIYFVSMVILGAFFVMNLILGVLS) threads the bilayer. The Cytoplasmic portion of the chain corresponds to 328–434 (GEFSKERTKA…RACRKAVKSQ (107 aa)). The II repeat unit spans residues 420–667 (NRRIRRACRK…VFLAIAVDNL (248 aa)). Residues 435–454 (AFYWLIILLVFLNTGVLATE) traverse the membrane as a helical segment. The Extracellular segment spans residues 455 to 467 (HYRQPIWLDQFQE). The chain crosses the membrane as a helical span at residues 468–487 (YTNIFFIALFTCEMILKMYS). Residues 488–496 (LGFQGYFVS) are Cytoplasmic-facing. Residues 497 to 515 (LFNRFDCFVVIGSISEMVL) form a helical membrane-spanning segment. Topologically, residues 516-525 (TSSELMAPLG) are extracellular. The chain crosses the membrane as a helical span at residues 526–544 (VSVLRCVRLLRVFKVTKYW). Over 545–563 (HSLSNLVASLLNSIQSIAS) the chain is Cytoplasmic. The chain crosses the membrane as a helical span at residues 564-583 (LLLLLFLFIVIFGLLGMQVF). The Extracellular segment spans residues 584–639 (GGRFTFKPEEEKPRSNFDSFYQSLLTVFQILTGEDWNVVMYDGIRAYGGVFSFGIV). Ca(2+) is bound at residue Glu-617. Residues 640–664 (ACIYYIILFICGNYILLNVFLAIAV) form a helical membrane-spanning segment. Over 665 to 785 (DNLADADSLS…TNRFRIFCHR (121 aa)) the chain is Cytoplasmic. The III repeat unit spans residues 777–1059 (NRFRIFCHRL…IFVGFVIVTF (283 aa)). Residues 786–809 (LCNHSNFGNFILCCIMFSSAMLAA) form a helical membrane-spanning segment. At 810-826 (ENPLKADASRNIVLNKF) the chain is on the extracellular side. The chain crosses the membrane as a helical span at residues 827–846 (DYFFTAVFTIELVLKLISYG). Residues 847 to 854 (FVLHDGAF) are Cytoplasmic-facing. A helical membrane pass occupies residues 855–877 (CRSAFNLLDLLVVCVSLISIFFN). Residues 878-885 (SNAISVVK) lie on the Extracellular side of the membrane. A helical transmembrane segment spans residues 886–900 (ILRVLRVLRPLRAIN). Over 901–921 (RAKGLKHVVQCVIVAVKTIGN) the chain is Cytoplasmic. Residues 922–941 (IVLVTCLLQFMFAVIGVQLF) form a helical membrane-spanning segment. Residues 942–1030 (KGKFFSCSDG…NGGPIYNFRP (89 aa)) are Extracellular-facing. Residues 979 to 1068 (REWKNNKFHF…FQNEGEQEYK (90 aa)) form a dihydropyridine binding region. A Ca(2+)-binding site is contributed by Glu-1005. Residues 1031-1055 (IVAAYYIIYIIIIAFFMVNIFVGFV) traverse the membrane as a helical segment. At 1056 to 1110 (IVTFQNEGEQEYKNCELDKNQRNCIEFALKAKPVRRYIPKHSIQYKVWWFVTSSS) the chain is on the cytoplasmic side. The IV repeat unit spans residues 1096-1370 (HSIQYKVWWF…LFVAVIMDNF (275 aa)). Residues 1111–1129 (FEYSIFVLIMINTVTLAMK) traverse the membrane as a helical segment. The Extracellular segment spans residues 1130–1143 (FYKQPEYYSEILDA). Residues 1144 to 1163 (LNMIFTAVFSLEFIFKLAAF) form a helical membrane-spanning segment. Topologically, residues 1164–1172 (RFKNYFGDA) are cytoplasmic. A helical transmembrane segment spans residues 1173–1191 (WNTFDFIIVLGSFIDIVYS). Over 1192 to 1219 (EIKTKEQALATCDGQSCNKAKGGSTLIS) the chain is Extracellular. Residues 1220–1238 (INFFRLFRVMRLVKLLSKG) traverse the membrane as a helical segment. Residues 1239-1257 (EGIRTLLWTFIKSFQALPY) are Cytoplasmic-facing. A helical membrane pass occupies residues 1258–1277 (VALLIVMLFFIYAVIGMQVF). The Extracellular portion of the chain corresponds to 1278-1343 (GKIMLEEGTS…AVNNCGSSIA (66 aa)). Residues 1327 to 1389 (KCDPESDAVN…LGPHHLDEFI (63 aa)) are dihydropyridine binding. Residues 1337–1378 (NCGSSIAFPYFISFYVLCSFLIINLFVAVIMDNFDYLTRDWS) are phenylalkylamine binding. A helical transmembrane segment spans residues 1344–1362 (FPYFISFYVLCSFLIINLF). The Cytoplasmic segment spans residues 1363 to 1687 (VAVIMDNFDY…PKSKDKDEEF (325 aa)).

It belongs to the calcium channel alpha-1 subunit (TC 1.A.1.11) family. As to expression, predominantly expressed in the larval body wall musculature. In adults, highest expression in thorax followed by head and at a lower extent by abdomen.

The protein localises to the membrane. In terms of biological role, voltage-sensitive calcium channels (VSCC) mediate the entry of calcium ions into excitable cells and are also involved in a variety of calcium-dependent processes, including muscle contraction, hormone or neurotransmitter release, gene expression, cell motility, cell division and cell death. MDL-alpha1 encodes a dihydropyridine- and diltiazem-sensitive current in larval body wall muscle. This is Muscle calcium channel subunit alpha-1 from Musca domestica (House fly).